The following is a 161-amino-acid chain: Protein shisa-like-2B (161 aa).

The chain crosses the membrane as a helical span at residues 65–85 (IGALIGLGIAALVLLAFVISV). The segment at 115-134 (QEGNSNRKSKAPRSNAASNS) is disordered.

The protein belongs to the shisa family.

Its subcellular location is the membrane. The sequence is that of Protein shisa-like-2B (SHISAL2B) from Bos taurus (Bovine).